The following is a 599-amino-acid chain: Elongation factor 4 (599 aa).

A tr-type G domain is found at 2–184 (NYKRNFSIIA…RLVRDIPAPK (183 aa)). Residues 14–19 (DHGKST) and 131–134 (NKID) each bind GTP.

Belongs to the TRAFAC class translation factor GTPase superfamily. Classic translation factor GTPase family. LepA subfamily.

The protein localises to the cell membrane. The enzyme catalyses GTP + H2O = GDP + phosphate + H(+). Required for accurate and efficient protein synthesis under certain stress conditions. May act as a fidelity factor of the translation reaction, by catalyzing a one-codon backward translocation of tRNAs on improperly translocated ribosomes. Back-translocation proceeds from a post-translocation (POST) complex to a pre-translocation (PRE) complex, thus giving elongation factor G a second chance to translocate the tRNAs correctly. Binds to ribosomes in a GTP-dependent manner. This is Elongation factor 4 from Hamiltonella defensa subsp. Acyrthosiphon pisum (strain 5AT).